Reading from the N-terminus, the 562-residue chain is DNA ligase (562 aa).

Position 252 (glutamate 252) interacts with ATP. Lysine 254 serves as the catalytic N6-AMP-lysine intermediate. Arginine 259, arginine 274, glutamate 303, phenylalanine 343, arginine 419, and lysine 425 together coordinate ATP.

The protein belongs to the ATP-dependent DNA ligase family. It depends on Mg(2+) as a cofactor.

The catalysed reaction is ATP + (deoxyribonucleotide)n-3'-hydroxyl + 5'-phospho-(deoxyribonucleotide)m = (deoxyribonucleotide)n+m + AMP + diphosphate.. Functionally, DNA ligase that seals nicks in double-stranded DNA during DNA replication, DNA recombination and DNA repair. The polypeptide is DNA ligase (Methanococcus aeolicus (strain ATCC BAA-1280 / DSM 17508 / OCM 812 / Nankai-3)).